The following is a 471-amino-acid chain: 6-phosphofructo-2-kinase/fructose-2,6-bisphosphatase 1 (471 aa).

The residue at position 2 (Ser-2) is an N-acetylserine. Residues 2 to 250 form a 6-phosphofructo-2-kinase region; it reads SREMGELTQT…AYYLMNIHVT (249 aa). At Ser-33 the chain carries Phosphoserine; by PKA. 49-57 contributes to the ATP binding site; that stretch reads GLPARGKTY. The beta-D-fructose 6-phosphate site is built by Arg-82 and Arg-105. The active site involves Asp-131. 2 residues coordinate beta-D-fructose 6-phosphate: Thr-133 and Arg-139. Position 141 is a phosphoserine (Ser-141). Cys-161 is an active-site residue. 170–175 contributes to the ATP binding site; that stretch reads NIKQVK. Beta-D-fructose 6-phosphate contacts are provided by Lys-175, Arg-196, and Tyr-200. The segment at 251–471 is fructose-2,6-bisphosphatase; the sequence is PRSIYLCRHG…EALDTVPAHY (221 aa). Position 258 (Arg-258) interacts with beta-D-fructose 2,6-bisphosphate. Catalysis depends on His-259, which acts as the Tele-phosphohistidine intermediate. Positions 265, 271, and 308 each coordinate beta-D-fructose 2,6-bisphosphate. Catalysis depends on Glu-328, which acts as the Proton donor/acceptor. Positions 339, 353, 357, 368, 394, and 398 each coordinate beta-D-fructose 2,6-bisphosphate. 350 to 353 contacts ATP; the sequence is FALR. Residues 394 to 398 and Tyr-430 contribute to the ATP site; that span reads QAVMR.

The protein in the C-terminal section; belongs to the phosphoglycerate mutase family. As to quaternary structure, homodimer. In terms of tissue distribution, liver.

The catalysed reaction is beta-D-fructose 2,6-bisphosphate + H2O = beta-D-fructose 6-phosphate + phosphate. It carries out the reaction beta-D-fructose 6-phosphate + ATP = beta-D-fructose 2,6-bisphosphate + ADP + H(+). Its activity is regulated as follows. Phosphorylation at Ser-33 inhibits the kinase and activates the bisphosphatase. Synthesis and degradation of fructose 2,6-bisphosphate. This chain is 6-phosphofructo-2-kinase/fructose-2,6-bisphosphatase 1, found in Mus musculus (Mouse).